The primary structure comprises 39 residues: Photosystem II reaction center protein L (39 aa).

The helical transmembrane segment at 18-38 (SLYLGLLLVAVLGILFSSYFF) threads the bilayer.

This sequence belongs to the PsbL family. PSII is composed of 1 copy each of membrane proteins PsbA, PsbB, PsbC, PsbD, PsbE, PsbF, PsbH, PsbI, PsbJ, PsbK, PsbL, PsbM, PsbT, PsbX, PsbY, PsbZ, Psb30/Ycf12, peripheral proteins PsbO, CyanoQ (PsbQ), PsbU, PsbV and a large number of cofactors. It forms dimeric complexes.

Its subcellular location is the cellular thylakoid membrane. Functionally, one of the components of the core complex of photosystem II (PSII). PSII is a light-driven water:plastoquinone oxidoreductase that uses light energy to abstract electrons from H(2)O, generating O(2) and a proton gradient subsequently used for ATP formation. It consists of a core antenna complex that captures photons, and an electron transfer chain that converts photonic excitation into a charge separation. This subunit is found at the monomer-monomer interface and is required for correct PSII assembly and/or dimerization. The protein is Photosystem II reaction center protein L of Rippkaea orientalis (strain PCC 8801 / RF-1) (Cyanothece sp. (strain PCC 8801)).